Consider the following 257-residue polypeptide: Acetylglutamate kinase (257 aa).

Substrate-binding positions include 43-44, Arg-65, and Asn-157; that span reads GG. ATP is bound by residues 180-185 and 208-210; these read DVSGIL and IIT.

It belongs to the acetylglutamate kinase family. ArgB subfamily. Homodimer.

The protein localises to the cytoplasm. It carries out the reaction N-acetyl-L-glutamate + ATP = N-acetyl-L-glutamyl 5-phosphate + ADP. The protein operates within amino-acid biosynthesis; L-arginine biosynthesis; N(2)-acetyl-L-ornithine from L-glutamate: step 2/4. Catalyzes the ATP-dependent phosphorylation of N-acetyl-L-glutamate. The sequence is that of Acetylglutamate kinase from Edwardsiella ictaluri (strain 93-146).